Here is a 4001-residue protein sequence, read N- to C-terminus: Ankyrin repeat and KH domain-containing protein mask (4001 aa).

Positions 1–14 (MNNDAKNHESDDLN) are enriched in basic and acidic residues. 3 disordered regions span residues 1–61 (MNND…NRQL), 91–174 (KNEP…GGGS), and 391–494 (DTDT…FLLD). A compositionally biased stretch (polar residues) spans 15-30 (VRSTAYFNQQTTTNQP). Over residues 38-61 (NNTGSGSGSNNNNNNTNQNPNRQL) the composition is skewed to low complexity. A compositionally biased stretch (polar residues) spans 94-117 (PLTTTESSGVLTNTPLPSNSRLKV). Residues 118–159 (NNNNNTNNTAKMSGTSSSQSSATPTPPTASSSTTTTTTTNIS) are compositionally biased toward low complexity. Gly residues predominate over residues 160-174 (TGGGGSGSSGGGGGS). 2 stretches are compositionally biased toward acidic residues: residues 408–425 (SESE…ESDP) and 434–486 (VRED…EDAP). S501 is subject to Phosphoserine. ANK repeat units lie at residues 546–575 (SGFS…NVNL), 584–614 (DGES…QVED), 618–647 (KDST…DVNA), 651–680 (TGNT…NVEE), 684–713 (NGHT…GINT), 718–747 (FKES…DQEH), 751–780 (EMHT…QVNM), 784–813 (SFES…NIEE), 817–846 (EGYT…NINA), 851–880 (TQET…NLEL), 881–910 (GAST…NVHA), 914–943 (TGDT…ELEH), 947–976 (GGRT…NVNK), 981–1011 (NDHT…PFHK), and 1014–1043 (DNST…ISPT). Disordered regions lie at residues 1046 to 1067 (AASA…NQMR) and 1306 to 1376 (QPGE…PTAL). A compositionally biased stretch (polar residues) spans 1367–1376 (DNNQPVPTAL). Phosphoserine is present on residues S1389 and S1588. 6 disordered regions span residues 1583 to 1612 (GDQP…RLGS), 1646 to 1669 (SDLE…ENTL), 1682 to 1779 (EDGI…SLPL), 1852 to 1872 (VVHQ…DGSA), 2084 to 2108 (MAQH…QQLH), and 2225 to 2256 (TPAP…KERR). 3 stretches are compositionally biased toward acidic residues: residues 1646-1657 (SDLESECEDDAE), 1685-1704 (IIVE…EEQD), and 1716-1759 (DDED…EPDS). Positions 1760-1776 (DQGTGNNNNNSKSGASS) are enriched in low complexity. The segment covering 2084-2093 (MAQHQAQQQQ) has biased composition (low complexity). Residues 2228-2237 (PSSGVSSTKS) are compositionally biased toward polar residues. ANK repeat units lie at residues 2312–2341 (NHDT…NIEH), 2345–2374 (KGFT…ELEA), 2379–2408 (TKDT…NKEH), 2412–2441 (SDYT…EINS), 2447–2476 (LGIS…DINA), 2481–2510 (NRNT…NVEH), 2514–2543 (TGLT…DVNA), 2549–2578 (SRDT…SVEV), 2582–2611 (KGNS…DIDS), and 2615–2644 (RRVS…QFPS). The stretch at 2674–2732 (AKEAQAVKANKNASILLEELDLERTREESRKAAAARRRERKKKKKMEKKEEKRRQQQGN) forms a coiled coil. Phosphoserine is present on S2687. T2698 is modified (phosphothreonine). The disordered stretch occupies residues 2699 to 3033 (REESRKAAAA…TSTTTAASSV (335 aa)). The span at 2706–2719 (AAARRRERKKKKKM) shows a compositional bias: basic residues. A compositionally biased stretch (acidic residues) spans 2739-2762 (MQGDDDDASDKDDDSDKDDEDEEA). 2 positions are modified to phosphoserine: S2747 and S2753. Low complexity predominate over residues 2793-2810 (SQSAQAAEAAANSVSTNS). Over residues 2828–2839 (EPTQPVITSNSV) the composition is skewed to polar residues. Positions 2868-2886 (RQLDVKKEEPALKKKEEKN) are enriched in basic and acidic residues. Over residues 2906–2941 (ALPAKQQPSSSSKLQSSESASNINSSTATNTSSANT) the composition is skewed to low complexity. Polar residues predominate over residues 2950–2960 (ASQTASATTLN). The segment covering 2963 to 2975 (KRTEVDGWKEVVR) has biased composition (basic and acidic residues). A compositionally biased stretch (polar residues) spans 2995–3004 (TATSSATSVQ). A compositionally biased stretch (low complexity) spans 3012 to 3032 (ANSSSNSSSSLTTSTTTAASS). Positions 3036–3100 (MTCKKVQVPV…DATKQAHMLI (65 aa)) constitute a KH domain. 3 stretches are compositionally biased toward low complexity: residues 3156–3178 (ASTT…ASYS), 3195–3227 (SGRS…AGSS), and 3244–3257 (NGVI…SSKS). 4 disordered regions span residues 3156–3329 (ASTT…GQGG), 3383–3457 (KPIA…QTSQ), 3520–3636 (AVGD…PPTA), and 3744–3786 (IFPQ…GGAA). A compositionally biased stretch (polar residues) spans 3262 to 3278 (QKSSTTLGKSSTVSPGA). Low complexity predominate over residues 3396–3416 (GSPTQVQQQHQTQQQQQQQLP). Positions 3417 to 3427 (QPAPVPGPQPQ) are enriched in pro residues. The span at 3428-3457 (QQPLQQQQQQQAPQQQPQQPNQQQQPQTSQ) shows a compositional bias: low complexity. Residues 3539 to 3559 (NILSSPVGSSKASSNHSTSPP) show a composition bias toward polar residues. Over residues 3565-3577 (QQQQQQQPQSSQQ) the composition is skewed to low complexity. At S3596 the chain carries Phosphoserine. A compositionally biased stretch (low complexity) spans 3774-3786 (PPGTGARQPGGAA). Residues S3820, S3822, and S3825 each carry the phosphoserine modification. The segment at 3876–3945 (KAQPPGLQQP…HNMQAPPNMS (70 aa)) is disordered. Low complexity predominate over residues 3891-3910 (SQQQQQQPLNWLKQQPQQQQ).

In terms of assembly, may interact with Unc-89 (via protein kinase domain 1 or 2). As to expression, expressed ubiquitously in eye imaginal disk, slightly higher expression is seen in presumptive photoreceptors. Expressed in indirect flight muscle (IFM) (at protein level).

Its subcellular location is the cytoplasm. It is found in the myofibril. The protein localises to the sarcomere. It localises to the z line. The protein resides in the m line. Functionally, mediator of receptor tyrosine kinase (RTK) signaling, and may act either downstream of MAPK or transduce signaling through a parallel branch of the RTK pathway. Required for the development and organization of indirect flight muscle sarcomeres by regulating the formation of M line and H zone and the correct assembly of thick and thin filaments in the sarcomere. This chain is Ankyrin repeat and KH domain-containing protein mask, found in Drosophila melanogaster (Fruit fly).